Here is a 229-residue protein sequence, read N- to C-terminus: Large ribosomal subunit protein uL1 (229 aa).

It belongs to the universal ribosomal protein uL1 family. As to quaternary structure, part of the 50S ribosomal subunit.

Binds directly to 23S rRNA. The L1 stalk is quite mobile in the ribosome, and is involved in E site tRNA release. In terms of biological role, protein L1 is also a translational repressor protein, it controls the translation of the L11 operon by binding to its mRNA. This Streptococcus pneumoniae serotype 2 (strain D39 / NCTC 7466) protein is Large ribosomal subunit protein uL1.